The primary structure comprises 167 residues: uncharacterized protein (167 aa).

It is found in the virion. This is an uncharacterized protein from Acanthamoeba polyphaga (Amoeba).